The sequence spans 84 residues: Small ribosomal subunit protein bS16 (84 aa).

It belongs to the bacterial ribosomal protein bS16 family.

This is Small ribosomal subunit protein bS16 from Dichelobacter nodosus (strain VCS1703A).